Consider the following 448-residue polypeptide: Beta-alanine--pyruvate aminotransferase (448 aa).

Substrate is bound at residue Trp61. 120–121 is a binding site for pyridoxal 5'-phosphate; the sequence is GS. Lys288 is subject to N6-(pyridoxal phosphate)lysine. Residue Thr327 coordinates pyridoxal 5'-phosphate. Substrate contacts are provided by Arg414 and Gln421.

This sequence belongs to the class-III pyridoxal-phosphate-dependent aminotransferase family. As to quaternary structure, homotetramer. It depends on pyridoxal 5'-phosphate as a cofactor.

The enzyme catalyses 3-oxopropanoate + L-alanine = beta-alanine + pyruvate. Its activity is regulated as follows. Inhibited by gabaculine (5-amino-1,3-cyclohexadienylcarboxylic acid). Its function is as follows. Involved in the degradation of beta-alanine. Catalyzes the transfer of the amino group from beta-alanine to pyruvate to yield L-alanine and 3-oxopropanoate. It can also accept both 4-aminobutyrate and (S)-alpha-methylbenzylamine (MBA) as amino-group donors in the presence of pyruvate as an amine acceptor. The protein is Beta-alanine--pyruvate aminotransferase (bauA) of Pseudomonas aeruginosa (strain ATCC 15692 / DSM 22644 / CIP 104116 / JCM 14847 / LMG 12228 / 1C / PRS 101 / PAO1).